Consider the following 179-residue polypeptide: Large ribosomal subunit protein uL6 (179 aa).

This sequence belongs to the universal ribosomal protein uL6 family. In terms of assembly, part of the 50S ribosomal subunit.

Functionally, this protein binds to the 23S rRNA, and is important in its secondary structure. It is located near the subunit interface in the base of the L7/L12 stalk, and near the tRNA binding site of the peptidyltransferase center. This Pelobacter propionicus (strain DSM 2379 / NBRC 103807 / OttBd1) protein is Large ribosomal subunit protein uL6.